The primary structure comprises 63 residues: Ferredoxin (63 aa).

Residues lysine 2–glutamate 29 enclose the 4Fe-4S ferredoxin-type domain. Cysteine 10, cysteine 13, cysteine 16, and cysteine 55 together coordinate [4Fe-4S] cluster.

The cofactor is [4Fe-4S] cluster.

Its function is as follows. Ferredoxins are iron-sulfur proteins that transfer electrons in a wide variety of metabolic reactions. The chain is Ferredoxin from Moorella thermoacetica (Clostridium thermoaceticum).